We begin with the raw amino-acid sequence, 33 residues long: Beta-amanitin proprotein (33 aa).

Residues Met-1 to Pro-10 constitute a propeptide that is removed on maturation. The cyclopeptide (Ile-Pro) cross-link spans Ile-11–Pro-18. A cross-link (2'-cysteinyl-6'-hydroxytryptophan sulfoxide (Trp-Cys)) is located at residues Trp-12–Cys-16. Positions Cys-19–Ala-33 are excised as a propeptide.

The protein belongs to the MSDIN fungal toxin family. Post-translationally, processed by the macrocyclase-peptidase enzyme POPB to yield a toxic cyclic decapeptide. POPB first removes 10 residues from the N-terminus. Conformational trapping of the remaining peptide forces the enzyme to release this intermediate rather than proceed to macrocyclization. The enzyme rebinds the remaining peptide in a different conformation and catalyzes macrocyclization of the N-terminal 8 residues.

Its function is as follows. Toxin belonging to the bicyclic octapeptides amatoxins that acts by binding non-competitively to RNA polymerase II and greatly slowing the elongation of transcripts from target promoters. This is Beta-amanitin proprotein from Amanita pallidorosea.